The following is a 494-amino-acid chain: Glycerol kinase (494 aa).

Threonine 12 is a binding site for ADP. ATP is bound by residues threonine 12, threonine 13, and serine 14. Sn-glycerol 3-phosphate is bound at residue threonine 12. Arginine 16 contributes to the ADP binding site. Residues arginine 82, glutamate 83, tyrosine 135, and aspartate 244 each contribute to the sn-glycerol 3-phosphate site. 5 residues coordinate glycerol: arginine 82, glutamate 83, tyrosine 135, aspartate 244, and glutamine 245. ADP contacts are provided by threonine 266 and glycine 309. Residues threonine 266, glycine 309, glutamine 313, and glycine 409 each coordinate ATP. The ADP site is built by glycine 409 and asparagine 413.

The protein belongs to the FGGY kinase family.

The enzyme catalyses glycerol + ATP = sn-glycerol 3-phosphate + ADP + H(+). It participates in polyol metabolism; glycerol degradation via glycerol kinase pathway; sn-glycerol 3-phosphate from glycerol: step 1/1. With respect to regulation, inhibited by fructose 1,6-bisphosphate (FBP). Key enzyme in the regulation of glycerol uptake and metabolism. Catalyzes the phosphorylation of glycerol to yield sn-glycerol 3-phosphate. The chain is Glycerol kinase from Alteromonas mediterranea (strain DSM 17117 / CIP 110805 / LMG 28347 / Deep ecotype).